A 392-amino-acid polypeptide reads, in one-letter code: Protein O-glucosyltransferase 1 (392 aa).

The signal sequence occupies residues 1–23 (MELGVSSQLWLWLLLLLLPPVPG). 4 disulfide bridges follow: C49–C56, C54–C357, C102–C108, and C263–C286. The N-linked (GlcNAc...) asparagine glycan is linked to N53. Positions 103 to 107 (MFPSR) are interaction with the consensus sequence C-X-S-X-[PA]-C in peptide substrates. D133 functions as the Proton donor/acceptor in the catalytic mechanism. Residues 172–178 (AVWPIYP) form an interaction with the consensus sequence C-X-S-X-[PA]-C in peptide substrates region. Y177 contacts UDP-alpha-D-glucose. Residue N204 is glycosylated (N-linked (GlcNAc...) asparagine). Residues S212, R218, and 274-279 (VAASFR) each bind UDP-alpha-D-glucose. N373 carries an N-linked (GlcNAc...) asparagine glycan. Residues 389 to 392 (KIEL) carry the Prevents secretion from ER motif.

Belongs to the glycosyltransferase 90 family.

The protein localises to the endoplasmic reticulum lumen. It catalyses the reaction L-seryl-[EGF-like domain protein] + UDP-alpha-D-xylose = 3-O-(beta-D-xylosyl)-L-seryl-[EGF-like domain protein] + UDP + H(+). It carries out the reaction L-seryl-[EGF-like domain protein] + UDP-alpha-D-glucose = 3-O-(beta-D-glucosyl)-L-seryl-[EGF-like domain protein] + UDP + H(+). The protein operates within protein modification; protein glycosylation. Dual specificity glycosyltransferase that catalyzes the transfer of glucose and xylose from UDP-glucose and UDP-xylose, respectively, to a serine residue found in the consensus sequence of C-X-S-X-P-C. Specifically targets extracellular EGF repeats of protein such as CRB2, F7, F9 and NOTCH2. Acts as a positive regulator of Notch signaling by mediating O-glucosylation of Notch, leading to regulate muscle development. Notch glucosylation does not affect Notch ligand binding. Required during early development to promote gastrulation: acts by mediating O-glucosylation of CRB2, which is required for CRB2 localization to the cell membrane. The protein is Protein O-glucosyltransferase 1 (POGLUT1) of Bos taurus (Bovine).